The sequence spans 409 residues: Endoglucanase B (409 aa).

Substrate-binding positions include H61, 65-66 (WY), Y92, and H127. E165 acts as the Proton donor in catalysis. Y228 provides a ligand contact to substrate. Catalysis depends on E254, which acts as the Nucleophile. Residues 260–261 (AT), W288, and 293–295 (KDE) each bind substrate. The disordered stretch occupies residues 326 to 372 (IRESATTPPSDPTPPSDPDPGEPEPDPGEPDPTPPSDPGDYPAWDPN). Residues 334 to 343 (PSDPTPPSDP) show a composition bias toward pro residues. The segment covering 344 to 354 (DPGEPEPDPGE) has biased composition (acidic residues).

Belongs to the glycosyl hydrolase 5 (cellulase A) family.

It catalyses the reaction Endohydrolysis of (1-&gt;4)-beta-D-glucosidic linkages in cellulose, lichenin and cereal beta-D-glucans.. The sequence is that of Endoglucanase B (celB) from Evansella cellulosilytica (strain ATCC 21833 / DSM 2522 / FERM P-1141 / JCM 9156 / N-4) (Bacillus cellulosilyticus).